A 62-amino-acid chain; its full sequence is Inner membrane protein p12 (62 aa).

A helical membrane pass occupies residues 16-36 (LLIVAIIVVIMAIMLYYFWWM).

It belongs to the asfivirus inner membrane protein p12 family. As to quaternary structure, homomultimer; disulfide-linked. Post-translationally, not glycosylated.

The protein resides in the virion membrane. This is Inner membrane protein p12 from African swine fever virus (isolate Tick/Malawi/Lil 20-1/1983) (ASFV).